We begin with the raw amino-acid sequence, 487 residues long: Histamine H1 receptor (487 aa).

At 1–29 (MSLPNSSCLLEDKMCEGNKTTMASPQLMP) the chain is on the extracellular side. Residues Asn-5 and Asn-18 are each glycosylated (N-linked (GlcNAc...) asparagine). A helical membrane pass occupies residues 30-50 (LVVVLSTISLVTVGLNLLVLY). Over 51–64 (AVRSERKLHTVGNL) the chain is Cytoplasmic. The helical transmembrane segment at 65–89 (YIVSLSVADLIVGAVVMPMNILYLL) threads the bilayer. Residues 90–97 (MSKWSLGR) lie on the Extracellular side of the membrane. The helical transmembrane segment at 98-123 (PLCLFWLSMDYVASTASIFSVFILCI) threads the bilayer. A disulfide bridge connects residues Cys-100 and Cys-180. Histamine contacts are provided by Asp-107 and Thr-112. The segment at 107–112 (DYVAST) is important for agonist binding. Residues 124 to 144 (DRYRSVQQPLRYLKYRTKTRA) are Cytoplasmic-facing. Phosphothreonine is present on residues Thr-140 and Thr-142. A helical transmembrane segment spans residues 145–164 (SATILGAWFLSFLWVIPILG). The Extracellular portion of the chain corresponds to 165–188 (WNHFRQQISVRREDKCETDFYDVT). Residues 189–211 (WFKVMTAIINFYLPTLLMLWFYA) form a helical membrane-spanning segment. Asn-198 provides a ligand contact to histamine. The Cytoplasmic portion of the chain corresponds to 212 to 416 (KIYKAVQKHC…MNRERKAAKQ (205 aa)). Ser-230 is subject to Phosphoserine. The segment covering 238–261 (KLRPENPKGDAKKPGKESPWEVLK) has biased composition (basic and acidic residues). The interval 238–286 (KLRPENPKGDAKKPGKESPWEVLKRKPKDAGGGSVLKSPSQTPKEMKSP) is disordered. Thr-279 carries the phosphothreonine modification. 2 positions are modified to phosphoserine: Ser-344 and Ser-347. The interval 345-379 (EISEDQMLGDSQSFSRTDSDTTTETAPGKGKLRSG) is disordered. Polar residues predominate over residues 353-369 (GDSQSFSRTDSDTTTET). Residues Ser-380, Ser-396, and Ser-398 each carry the phosphoserine modification. The helical transmembrane segment at 417 to 440 (LGFIMAAFILCWIPYFIFFMVIAF) threads the bilayer. The interval 424 to 428 (FILCW) is important for agonist binding. Tyr-431 serves as a coordination point for histamine. Cys-441 and Cys-444 are joined by a disulfide. At 441–446 (CKNCCN) the chain is on the extracellular side. A helical transmembrane segment spans residues 447–469 (EHLHMFTIWLGYINSTLNPLIYP). At 470–487 (LCNENFKKTFKRILHIRS) the chain is on the cytoplasmic side.

It belongs to the G-protein coupled receptor 1 family. Post-translationally, phosphorylation at sites in the second and third cytoplasmic loops independently contribute to agonist-induced receptor down-regulation.

It is found in the cell membrane. Its function is as follows. G-protein-coupled receptor for histamine, a biogenic amine that functions as an immune modulator and a neurotransmitter. Through the H1 receptor, histamine mediates the contraction of smooth muscles and increases capillary permeability due to contraction of terminal venules. Also mediates neurotransmission in the central nervous system and thereby regulates circadian rhythms, emotional and locomotor activities as well as cognitive functions. The sequence is that of Histamine H1 receptor from Pongo pygmaeus (Bornean orangutan).